The following is a 1244-amino-acid chain: Protein STU1 (1244 aa).

2 HEAT repeats span residues leucine 87–alanine 124 and leucine 159–proline 196. A compositionally biased stretch (low complexity) spans glutamate 232 to serine 243. 3 disordered regions span residues glutamate 232–valine 326, leucine 561–valine 758, and alanine 795–lysine 998. Composition is skewed to polar residues over residues arginine 261–histidine 271, lysine 287–serine 312, alanine 574–serine 591, and alanine 607–phenylalanine 622. Low complexity-rich tracts occupy residues serine 652–alanine 663, alanine 690–lysine 703, and proline 837–arginine 850. 2 stretches are compositionally biased toward basic and acidic residues: residues leucine 863 to serine 872 and lysine 979 to lysine 998. 2 HEAT repeats span residues threonine 1038–threonine 1075 and cysteine 1126–leucine 1163.

Belongs to the CLASP family. In terms of assembly, interacts with microtubules.

The protein localises to the cytoplasm. Its subcellular location is the cytoskeleton. The protein resides in the nucleus. It is found in the spindle. Functionally, microtubule binding protein that promotes the stabilization of dynamic microtubules. Required for mitotic spindle formation. The sequence is that of Protein STU1 (STU1) from Coccidioides immitis (strain RS) (Valley fever fungus).